We begin with the raw amino-acid sequence, 119 residues long: Ribonuclease P protein component (119 aa).

The protein belongs to the RnpA family. Consists of a catalytic RNA component (M1 or rnpB) and a protein subunit.

The catalysed reaction is Endonucleolytic cleavage of RNA, removing 5'-extranucleotides from tRNA precursor.. In terms of biological role, RNaseP catalyzes the removal of the 5'-leader sequence from pre-tRNA to produce the mature 5'-terminus. It can also cleave other RNA substrates such as 4.5S RNA. The protein component plays an auxiliary but essential role in vivo by binding to the 5'-leader sequence and broadening the substrate specificity of the ribozyme. The polypeptide is Ribonuclease P protein component (Cronobacter sakazakii (strain ATCC BAA-894) (Enterobacter sakazakii)).